A 249-amino-acid polypeptide reads, in one-letter code: 2,3-bisphosphoglycerate-dependent phosphoglycerate mutase (249 aa).

Substrate contacts are provided by residues 9–16, 22–23, R61, 88–91, K99, 115–116, and 184–185; these read RHGQSQWN, TG, ERHY, RR, and GN. The active-site Tele-phosphohistidine intermediate is H10. The active-site Proton donor/acceptor is the E88.

Belongs to the phosphoglycerate mutase family. BPG-dependent PGAM subfamily. As to quaternary structure, homodimer.

It catalyses the reaction (2R)-2-phosphoglycerate = (2R)-3-phosphoglycerate. It participates in carbohydrate degradation; glycolysis; pyruvate from D-glyceraldehyde 3-phosphate: step 3/5. Its function is as follows. Catalyzes the interconversion of 2-phosphoglycerate and 3-phosphoglycerate. In Xylella fastidiosa (strain 9a5c), this protein is 2,3-bisphosphoglycerate-dependent phosphoglycerate mutase.